The chain runs to 280 residues: UPF0276 protein CC_2906 (280 aa).

This sequence belongs to the UPF0276 family.

The polypeptide is UPF0276 protein CC_2906 (Caulobacter vibrioides (strain ATCC 19089 / CIP 103742 / CB 15) (Caulobacter crescentus)).